A 1173-amino-acid chain; its full sequence is DNA-directed RNA polymerase subunit beta (1173 aa).

The protein belongs to the RNA polymerase beta chain family. The RNAP catalytic core consists of 2 alpha, 1 beta, 1 beta' and 1 omega subunit. When a sigma factor is associated with the core the holoenzyme is formed, which can initiate transcription.

It carries out the reaction RNA(n) + a ribonucleoside 5'-triphosphate = RNA(n+1) + diphosphate. Functionally, DNA-dependent RNA polymerase catalyzes the transcription of DNA into RNA using the four ribonucleoside triphosphates as substrates. In Kosmotoga olearia (strain ATCC BAA-1733 / DSM 21960 / TBF 19.5.1), this protein is DNA-directed RNA polymerase subunit beta.